Reading from the N-terminus, the 242-residue chain is MKFSPAYLLAFAPIVAAHFRLQYPTSRGFNADTMANFPCGDLAQSSNRTQVSLSSGSFPVALRMGHDETAVEVLLALGNDPGTNFNITLHPTFRIEGLGEFCLPNVVFDESVLGTKITDGMNATLQVQSNGDPSGGLYACADIQFSTTAQDEKPSSCTNNTGISAIAFTGAAAERNANESTADGQAQSGSSGSSSDSGSHSGHSSATQTSSTTASSTAGAVALETAAWGILGAAVVGGLAVL.

A signal peptide spans 1-17 (MKFSPAYLLAFAPIVAA). N-linked (GlcNAc...) asparagine glycans are attached at residues N47, N86, N122, N159, and N178. The tract at residues 176–214 (NANESTADGQAQSGSSGSSSDSGSHSGHSSATQTSSTTA) is disordered. Residues 180–214 (STADGQAQSGSSGSSSDSGSHSGHSSATQTSSTTA) show a composition bias toward low complexity. The GPI-like-anchor amidated alanine moiety is linked to residue A218. The propeptide at 219–242 (GAVALETAAWGILGAAVVGGLAVL) is removed in mature form.

Post-translationally, the GPI-like anchor contains a phosphoceramide lipid group. The anchor position has not been determined.

It is found in the cell membrane. This is an uncharacterized protein from Aspergillus fumigatus (strain ATCC MYA-4609 / CBS 101355 / FGSC A1100 / Af293) (Neosartorya fumigata).